Consider the following 61-residue polypeptide: Venom protein 22.1 (61 aa).

Residues 1–18 form the signal peptide; it reads MDIKGLLVILFFVLLITG.

The protein belongs to the non-disulfide-bridged peptide (NDBP) superfamily. Long chain multifunctional peptide (group 2) family. As to expression, expressed by the venom gland.

The protein resides in the secreted. The polypeptide is Venom protein 22.1 (Lychas mucronatus (Chinese swimming scorpion)).